The following is a 368-amino-acid chain: Ribosomal RNA large subunit methyltransferase M (368 aa).

S-adenosyl-L-methionine-binding positions include S189, 222-225 (CPGG), D241, D261, and D278. Catalysis depends on K307, which acts as the Proton acceptor.

Belongs to the class I-like SAM-binding methyltransferase superfamily. RNA methyltransferase RlmE family. RlmM subfamily. As to quaternary structure, monomer.

The protein localises to the cytoplasm. It carries out the reaction cytidine(2498) in 23S rRNA + S-adenosyl-L-methionine = 2'-O-methylcytidine(2498) in 23S rRNA + S-adenosyl-L-homocysteine + H(+). Catalyzes the 2'-O-methylation at nucleotide C2498 in 23S rRNA. The protein is Ribosomal RNA large subunit methyltransferase M of Yersinia enterocolitica serotype O:8 / biotype 1B (strain NCTC 13174 / 8081).